A 289-amino-acid polypeptide reads, in one-letter code: Paired box protein 5 homolog (289 aa).

The segment at residues 29–155 (SHTGVNQLGG…SSINRIVRNK (127 aa)) is a DNA-binding region (paired). Positions 32–88 (GVNQLGGVFVNGRPLADTVRAQIVEMSQHGTRPCDISRQLKVSHGCVSKILGRYYST) are PAI subdomain. The segment at 107 to 155 (RVVECIAGYKRANPTMFAWEIRQKLIEDQICGEENVPSVSSINRIVRNK) is RED subdomain. Composition is skewed to low complexity over residues 166-179 (SVTS…SATS) and 189-198 (VQQHMQQSTS). A disordered region spans residues 166 to 198 (SVTSSAARPSSATSHHQRSPPRGVQQHMQQSTS).

It localises to the nucleus. It is found in the chromosome. Functionally, transcription factor. Binds to specific DNA sequence motifs in regulatory elements, for example in the genes encoding transcription factor lin-48, apoptosis regulator ced-9 and neuropeptide-like protein nlp-2. Specifies cell fate, playing an essential role in embryonic and larval development. Involved in morphogenesis of the vulva and uterus in hermaphrodites and of the rectal epithelium of the tail in males. Plays multiple roles in the development of the egg-laying system, acting in both lin-3/EGF-pathway-dependent and -independent processes. Positively regulates expression of neuropeptide-like proteins nlp-2 and nlp-7 in uvl cells in an EGF-pathway-dependent manner. Involved in negatively modulating apoptosis in germline and somatic cells, acting in partial redundancy with transcription factor pax-2, probably by directly regulating transcription of ced-9. Positively regulates transcription of lin-48 in hindgut cells and functions in the development of the hindgut. The protein is Paired box protein 5 homolog of Caenorhabditis elegans.